The sequence spans 388 residues: MKKGSRHNFVVSQENWTLHRKGYQDQRRHQEKVKEAIRKNLPDLVSEENIIMSNGREVIKIPIRSLDEYKIRYNYDKNKHVGQGDGDSQVGDVIARDPSAGQQGPGKGQGAGDQPGEDYFEAEVSILELEELLFRELELPNLQQKEEDHLVVEHIEFNDIRKKGLMGNIDKRRTILSAIKRNALEGRPGLIPIYNDDLRFKTWNEVVRPESKAVVLAMMDTSGSMGRWEKYMARSFFFWMTRFLRTKYETVDIEFIAHHTEAKVVSEEDFFSKGESGGTICSSAYRKALELINEKYDPARYNIYPFHFSDGDNLTSDNARCLKLVHELMESSSMFGYGEVNQYSRHSTLMNAYKNLKDPRFRSYVLKEKGDVYRAMKTFFKKEEEAVS.

Residues 80 to 117 (HVGQGDGDSQVGDVIARDPSAGQQGPGKGQGAGDQPGE) are disordered. A compositionally biased stretch (gly residues) spans 103 to 113 (QGPGKGQGAGD).

This sequence belongs to the UPF0229 family.

This is UPF0229 protein BH1031 from Halalkalibacterium halodurans (strain ATCC BAA-125 / DSM 18197 / FERM 7344 / JCM 9153 / C-125) (Bacillus halodurans).